The chain runs to 193 residues: Epididymal-specific lipocalin-12 (193 aa).

The signal sequence occupies residues 1 to 19; it reads MGPWWALWLILTLPQILGG. A disulfide bond links Cys-88 and Cys-193. N-linked (GlcNAc...) asparagine glycosylation is found at Asn-143 and Asn-172.

This sequence belongs to the calycin superfamily. Lipocalin family. In terms of assembly, monomer.

The protein localises to the secreted. Functionally, binds all-trans retinoic acid and may act as a retinoid carrier protein within the epididymis. May play a role in male fertility. This chain is Epididymal-specific lipocalin-12 (Lcn12), found in Rattus norvegicus (Rat).